Reading from the N-terminus, the 207-residue chain is Small ribosomal subunit protein uS4c (207 aa).

The region spanning 92–156 (MRLDNILFRL…YQSIITKRIE (65 aa)) is the S4 RNA-binding domain.

This sequence belongs to the universal ribosomal protein uS4 family. As to quaternary structure, part of the 30S ribosomal subunit. Contacts protein S5. The interaction surface between S4 and S5 is involved in control of translational fidelity.

The protein localises to the plastid. It is found in the chloroplast. Functionally, one of the primary rRNA binding proteins, it binds directly to 16S rRNA where it nucleates assembly of the body of the 30S subunit. With S5 and S12 plays an important role in translational accuracy. This chain is Small ribosomal subunit protein uS4c (rps4), found in Equisetum palustre (Marsh horsetail).